Consider the following 246-residue polypeptide: RNA polymerase sigma-B factor (246 aa).

The short motif at 25–38 (DLIQEGNIGLMKAV) is the Polymerase core binding element. Residues 201–220 (LKELGEHFGFSRERARQLEI) constitute a DNA-binding region (H-T-H motif).

It belongs to the sigma-70 factor family.

In terms of biological role, sigma factors are initiation factors that promote the attachment of RNA polymerase to specific initiation sites and are then released. This sigma factor is essential for late-stage differentiation of M.xanthus. This chain is RNA polymerase sigma-B factor (sigB), found in Myxococcus xanthus.